We begin with the raw amino-acid sequence, 367 residues long: 3-isopropylmalate dehydrogenase (367 aa).

77–90 (GPKYDDLDFSVKPE) contacts NAD(+). R97, R107, R135, and D224 together coordinate substrate. Residues D224, D248, and D252 each contribute to the Mg(2+) site. 287 to 299 (GSAPDIAGQGKAN) contributes to the NAD(+) binding site.

This sequence belongs to the isocitrate and isopropylmalate dehydrogenases family. LeuB type 1 subfamily. As to quaternary structure, homodimer. Mg(2+) is required as a cofactor. Requires Mn(2+) as cofactor.

It localises to the cytoplasm. It carries out the reaction (2R,3S)-3-isopropylmalate + NAD(+) = 4-methyl-2-oxopentanoate + CO2 + NADH. It participates in amino-acid biosynthesis; L-leucine biosynthesis; L-leucine from 3-methyl-2-oxobutanoate: step 3/4. Functionally, catalyzes the oxidation of 3-carboxy-2-hydroxy-4-methylpentanoate (3-isopropylmalate) to 3-carboxy-4-methyl-2-oxopentanoate. The product decarboxylates to 4-methyl-2 oxopentanoate. This Ruegeria pomeroyi (strain ATCC 700808 / DSM 15171 / DSS-3) (Silicibacter pomeroyi) protein is 3-isopropylmalate dehydrogenase.